Consider the following 426-residue polypeptide: 3-phosphoshikimate 1-carboxyvinyltransferase (426 aa).

Residues Lys22, Ser23, and Arg27 each contribute to the 3-phosphoshikimate site. Position 22 (Lys22) interacts with phosphoenolpyruvate. Phosphoenolpyruvate-binding residues include Gly96 and Arg124. Positions 170, 171, 172, 198, 314, 337, and 341 each coordinate 3-phosphoshikimate. Gln172 contacts phosphoenolpyruvate. Catalysis depends on Asp314, which acts as the Proton acceptor. Arg345, Arg387, and Lys412 together coordinate phosphoenolpyruvate.

The protein belongs to the EPSP synthase family. Monomer.

It localises to the cytoplasm. The enzyme catalyses 3-phosphoshikimate + phosphoenolpyruvate = 5-O-(1-carboxyvinyl)-3-phosphoshikimate + phosphate. It functions in the pathway metabolic intermediate biosynthesis; chorismate biosynthesis; chorismate from D-erythrose 4-phosphate and phosphoenolpyruvate: step 6/7. Its function is as follows. Catalyzes the transfer of the enolpyruvyl moiety of phosphoenolpyruvate (PEP) to the 5-hydroxyl of shikimate-3-phosphate (S3P) to produce enolpyruvyl shikimate-3-phosphate and inorganic phosphate. This Shewanella baltica (strain OS155 / ATCC BAA-1091) protein is 3-phosphoshikimate 1-carboxyvinyltransferase.